The sequence spans 267 residues: Hydroxyethylthiazole kinase (267 aa).

Substrate is bound at residue Met46. ATP-binding residues include Arg122 and Ser168. Gly195 serves as a coordination point for substrate.

This sequence belongs to the Thz kinase family. It depends on Mg(2+) as a cofactor.

It catalyses the reaction 5-(2-hydroxyethyl)-4-methylthiazole + ATP = 4-methyl-5-(2-phosphooxyethyl)-thiazole + ADP + H(+). Its pathway is cofactor biosynthesis; thiamine diphosphate biosynthesis; 4-methyl-5-(2-phosphoethyl)-thiazole from 5-(2-hydroxyethyl)-4-methylthiazole: step 1/1. Functionally, catalyzes the phosphorylation of the hydroxyl group of 4-methyl-5-beta-hydroxyethylthiazole (THZ). The protein is Hydroxyethylthiazole kinase of Nitratidesulfovibrio vulgaris (strain DP4) (Desulfovibrio vulgaris).